Consider the following 382-residue polypeptide: Cytochrome b (382 aa).

A run of 4 helical transmembrane segments spans residues 28–48, 72–94, 107–127, and 169–189; these read YGFLLGIIFFIQILTGVFLAS, WCFRYMHATGASLVFLLTYLHIL, SWISGLIIFALFIVTAFIGYV, and FFVLHFILPFVALCIVFIHIF. His-78 and His-92 together coordinate heme b. Residues His-173 and His-187 each coordinate heme b. His-192 contacts a ubiquinone. 4 consecutive transmembrane segments (helical) span residues 214-234, 274-294, 317-337, and 340-360; these read LLSLDVKGFNNIFILFLLQSI, IPSKTAGLLIVLASLQLLFLL, VPMIWFMCSFYALLWIGCQLP, and IFILYGRLFIISFFSSGLFAL.

It belongs to the cytochrome b family. The main subunits of complex b-c1 are: cytochrome b, cytochrome c1 and the Rieske protein. The cofactor is heme b.

It localises to the mitochondrion inner membrane. Its function is as follows. Component of the ubiquinol-cytochrome c reductase complex (complex III or cytochrome b-c1 complex) that is part of the mitochondrial respiratory chain. The b-c1 complex mediates electron transfer from ubiquinol to cytochrome c. Contributes to the generation of a proton gradient across the mitochondrial membrane that is then used for ATP synthesis. This Plasmodium vivax (strain Salvador I) protein is Cytochrome b (MT-CYB).